We begin with the raw amino-acid sequence, 302 residues long: N-acetyl-D-glucosamine kinase (302 aa).

ATP-binding positions include Gly-4–Lys-11 and Gly-133–Tyr-140. Zn(2+)-binding residues include His-157, Cys-177, Cys-179, and Cys-184.

It belongs to the ROK (NagC/XylR) family. NagK subfamily.

The catalysed reaction is N-acetyl-D-glucosamine + ATP = N-acetyl-D-glucosamine 6-phosphate + ADP + H(+). The protein operates within cell wall biogenesis; peptidoglycan recycling. In terms of biological role, catalyzes the phosphorylation of N-acetyl-D-glucosamine (GlcNAc) derived from cell-wall degradation, yielding GlcNAc-6-P. This chain is N-acetyl-D-glucosamine kinase, found in Vibrio cholerae serotype O1 (strain ATCC 39315 / El Tor Inaba N16961).